The sequence spans 801 residues: Phenylalanine--tRNA ligase beta subunit (801 aa).

The tRNA-binding domain occupies 39 to 147 (GGGLDEVVVA…TDLPLGVPVF (109 aa)). Positions 401–477 (LPRRTVRFRV…RLNGYNNIPV (77 aa)) constitute a B5 domain. D455, D461, E464, and E465 together coordinate Mg(2+). The FDX-ACB domain maps to 708–801 (SRFPDTFRDI…LVKKLAVTIR (94 aa)).

Belongs to the phenylalanyl-tRNA synthetase beta subunit family. Type 1 subfamily. As to quaternary structure, tetramer of two alpha and two beta subunits. Mg(2+) serves as cofactor.

Its subcellular location is the cytoplasm. The catalysed reaction is tRNA(Phe) + L-phenylalanine + ATP = L-phenylalanyl-tRNA(Phe) + AMP + diphosphate + H(+). This Geobacter metallireducens (strain ATCC 53774 / DSM 7210 / GS-15) protein is Phenylalanine--tRNA ligase beta subunit.